The primary structure comprises 398 residues: O-methyltransferase mpaG (398 aa).

Residue aspartate 264 participates in S-adenosyl-L-methionine binding. The Proton acceptor role is filled by histidine 306. Active-site residues include glutamate 335 and glutamate 362.

It belongs to the class I-like SAM-binding methyltransferase superfamily. Cation-independent O-methyltransferase family. COMT subfamily.

It is found in the cytoplasm. The protein resides in the cytosol. It catalyses the reaction (4E,8E)-10-(4,6-dihydroxy-7-methyl-3-oxo-1,3-dihydro-2-benzofuran-5-yl)-4,8-dimethyldeca-4,8-dienoate + S-adenosyl-L-methionine = (4E,8E)-10-(4-hydroxy-6-methoxy-7-methyl-3-oxo-1,3-dihydro-2-benzofuran-5-yl)-4,8-dimethyldeca-4,8-dienoate + S-adenosyl-L-homocysteine + H(+). It participates in secondary metabolite biosynthesis; terpenoid biosynthesis. Its function is as follows. O-methyltransferase; part of the gene cluster that mediates the biosynthesis of mycophenolic acid (MPA), the first isolated antibiotic natural product in the world obtained from a culture of Penicillium brevicompactum in 1893. MpaC methylates farnesyl-DHMP-3C (FDHMP-3C) to yield MFDHMP-3C. The first step of the pathway is the synthesis of 5-methylorsellinic acid (5MOA) by the cytosolic polyketide synthase mpaC. 5MOA is then converted to the phthalide compound 5,7-dihydroxy-4,6-dimethylphthalide (DHMP) by the endoplasmic reticulum-bound cytochrome P450 monooxygenase mpaDE. MpaDE first catalyzes hydroxylation of 5-MOA to 4,6-dihydroxy-2-(hydroxymethyl)-3-methylbenzoic acid (DHMB). MpaDE then acts as a lactone synthase that catalyzes the ring closure to convert DHMB into DHMP. The next step is the prenylation of DHMP by the Golgi apparatus-associated prenyltransferase mpaA to yield farnesyl-DHMP (FDHMP). The ER-bound oxygenase mpaB then mediates the oxidative cleavage the C19-C20 double bond in FDHMP to yield FDHMP-3C via a mycophenolic aldehyde intermediate. The O-methyltransferase mpaG catalyzes the methylation of FDHMP-3C to yield MFDHMP-3C. After the cytosolic methylation of FDHMP-3C, MFDHMP-3C enters into peroxisomes probably via free diffusion due to its low molecular weight. Upon a peroxisomal CoA ligation reaction, catalyzed by a beta-oxidation component enzyme acyl-CoA ligase ACL891, MFDHMP-3C-CoA would then be restricted to peroxisomes for the following beta-oxidation pathway steps. The peroxisomal beta-oxidation machinery than converts MFDHMP-3C-CoA into MPA_CoA, via a beta-oxidation chain-shortening process. Finally mpaH acts as a peroxisomal acyl-CoA hydrolase with high substrate specificity toward MPA-CoA to release the final product MPA. This is O-methyltransferase mpaG from Penicillium roqueforti (strain FM164).